Reading from the N-terminus, the 181-residue chain is Alkyl hydroperoxide reductase AhpD (181 aa).

Residue cysteine 130 is the Proton donor of the active site. A disulfide bridge links cysteine 130 with cysteine 133. Catalysis depends on cysteine 133, which acts as the Cysteine sulfenic acid (-SOH) intermediate.

This sequence belongs to the AhpD family.

It catalyses the reaction N(6)-[(R)-dihydrolipoyl]-L-lysyl-[lipoyl-carrier protein] + a hydroperoxide = N(6)-[(R)-lipoyl]-L-lysyl-[lipoyl-carrier protein] + an alcohol + H2O. In terms of biological role, antioxidant protein with alkyl hydroperoxidase activity. Required for the reduction of the AhpC active site cysteine residues and for the regeneration of the AhpC enzyme activity. In Gluconacetobacter diazotrophicus (strain ATCC 49037 / DSM 5601 / CCUG 37298 / CIP 103539 / LMG 7603 / PAl5), this protein is Alkyl hydroperoxide reductase AhpD.